Consider the following 123-residue polypeptide: MARIPLLLALLLAVSAAAAAQVGGNRGHGPLVGGWSPITDVGDPHIQELGGWAVERHASLSSDGLRFRRVTSGEQQVVSGMNYRLVVSASDPAGATASYVAVVYEQSWTNTRQLTSFKPAAAH.

Residues 1–19 form the signal peptide; that stretch reads MARIPLLLALLLAVSAAAA. A Cystatin domain is found at 33-91; sequence GGWSPITDVGDPHIQELGGWAVERHASLSSDGLRFRRVTSGEQQVVSGMNYRLVVSASD. Positions 76 to 80 match the Secondary area of contact motif; sequence QVVSG.

Belongs to the cystatin family. Phytocystatin subfamily.

It localises to the secreted. In terms of biological role, specific inhibitor of cysteine proteinases. Probably involved in the regulation of endogenous processes and in defense against pests and pathogens. The chain is Cysteine proteinase inhibitor 8 from Oryza sativa subsp. japonica (Rice).